The sequence spans 1344 residues: Period circadian protein homolog 2 (1344 aa).

Disordered regions lie at residues 1 to 21 and 42 to 112; these read MDCIEVRGFYSSTEEQNPEQQ and EYSG…NGKD. Residues 10-21 are compositionally biased toward polar residues; sequence YSSTEEQNPEQQ. Over residues 78 to 89 the composition is skewed to low complexity; sequence SSGSSGNDFSGN. The segment covering 99–111 has biased composition (basic and acidic residues); that stretch reads HDSHGHESDENGK. The Nuclear export signal 1 motif lies at 161 to 170; that stretch reads LLKTLQELKA. The PAS 1 domain occupies 231 to 298; it reads ITSEYIMKNA…FYTSTTPYRL (68 aa). Positions 358-362 match the LXXLL motif; that stretch reads LCCVL. Positions 371–437 constitute a PAS 2 domain; the sequence is YEAPRIPPDK…MLAIHKKILQ (67 aa). A PAC domain is found at 445–488; sequence YSPIRFCTRNGDYITMDTSWSSFINPWSRKVSFIIGRHKVRTGP. Positions 512-521 match the Nuclear export signal 2 motif; that stretch reads ITEQIYRLLL. Disordered regions lie at residues 531-609, 661-686, 823-894, 1038-1065, and 1107-1126; these read GYGS…QVKD, AKRKCEPSSSVNSSVHEQKASVNAIQ, LQDK…WSPS, TETRNEPSRSCTPQSVGPQDQASPPLFQ, and TTDAGSGKGSLPAESPMDAQ. Low complexity predominate over residues 549–559; it reads SSSDSTGNNND. Basic and acidic residues-rich tracts occupy residues 560-573 and 583-597; these read DTQKDKTISQDARK and TENKGKLEYKREPSA. The span at 667 to 684 shows a compositional bias: polar residues; that stretch reads PSSSVNSSVHEQKASVNA. Residues 825-836 show a composition bias toward basic and acidic residues; sequence DKPKGRPGERGG. The Nuclear localization signal signature appears at 851-865; the sequence is KKSGKNRKSKRIKPQ. Over residues 852-862 the composition is skewed to basic residues; sequence KSGKNRKSKRI. 3 stretches are compositionally biased toward polar residues: residues 865 to 875, 885 to 894, and 1045 to 1059; these read QESSDSTTSGT, GLNTTAWSPS, and SRSCTPQSVGPQDQA. The LXXLL motif lies at 1138–1142; that stretch reads LDILL. Residues 1149 to 1172 show a composition bias toward low complexity; it reads GTGSASSGSGVSAAAESLGSGSNG. A disordered region spans residues 1149 to 1197; it reads GTGSASSGSGVSAAAESLGSGSNGCDMSGSRTGSSETSHTSKYFGSIDS. Residues 1177–1197 are compositionally biased toward polar residues; sequence GSRTGSSETSHTSKYFGSIDS. Residues 1244–1344 are CRY binding domain; it reads SRDLETVLKE…PLSQVNEEQT (101 aa).

Component of the circadian clock oscillator which includes the CRY proteins, CLOCK or NPAS2, BMAL1 or BMAL2, CSNK1E, and the PER proteins. Interacts directly with PER3, and through a C-terminal domain, with CRY1 and CRY2.

The protein localises to the nucleus. It is found in the cytoplasm. Transcriptional repressor which forms a core component of the circadian clock. The circadian clock, an internal time-keeping system, regulates various physiological processes through the generation of approximately 24 hour circadian rhythms in gene expression, which are translated into rhythms in metabolism and behavior. It is derived from the Latin roots 'circa' (about) and 'diem' (day) and acts as an important regulator of a wide array of physiological functions including metabolism, sleep, body temperature, blood pressure, endocrine, immune, cardiovascular, and renal function. Consists of two major components: the central clock, residing in the suprachiasmatic nucleus (SCN) of the brain, and the peripheral clocks that are present in nearly every tissue and organ system. Both the central and peripheral clocks can be reset by environmental cues, also known as Zeitgebers (German for 'timegivers'). The predominant Zeitgeber for the central clock is light, which is sensed by retina and signals directly to the SCN. The central clock entrains the peripheral clocks through neuronal and hormonal signals, body temperature and feeding-related cues, aligning all clocks with the external light/dark cycle. Circadian rhythms allow an organism to achieve temporal homeostasis with its environment at the molecular level by regulating gene expression to create a peak of protein expression once every 24 hours to control when a particular physiological process is most active with respect to the solar day. Transcription and translation of core clock components (CLOCK, NPAS2, BMAL1, BMAL2, PER1, PER2, PER3, CRY1 and CRY2) plays a critical role in rhythm generation, whereas delays imposed by post-translational modifications (PTMs) are important for determining the period (tau) of the rhythms (tau refers to the period of a rhythm and is the length, in time, of one complete cycle). A diurnal rhythm is synchronized with the day/night cycle, while the ultradian and infradian rhythms have a period shorter and longer than 24 hours, respectively. Disruptions in the circadian rhythms contribute to the pathology of cardiovascular diseases, cancer, metabolic syndrome and aging. A transcription/translation feedback loop (TTFL) forms the core of the molecular circadian clock mechanism. Transcription factors, CLOCK or NPAS2 and BMAL1 or BMAL2, form the positive limb of the feedback loop, act in the form of a heterodimer and activate the transcription of core clock genes and clock-controlled genes (involved in key metabolic processes), harboring E-box elements (5'-CACGTG-3') within their promoters. The core clock genes: PER1/2/3 and CRY1/2 which are transcriptional repressors form the negative limb of the feedback loop and interact with the CLOCK|NPAS2-BMAL1|BMAL2 heterodimer inhibiting its activity and thereby negatively regulating their own expression. This heterodimer also activates nuclear receptors NR1D1/2 and RORA/B/G, which form a second feedback loop and which activate and repress BMAL1 transcription, respectively. PER1 and PER2 proteins transport CRY1 and CRY2 into the nucleus with appropriate circadian timing, but also contribute directly to repression of clock-controlled target genes through interaction with several classes of RNA-binding proteins, helicases and others transcriptional repressors. PER appears to regulate circadian control of transcription by at least three different modes. First, interacts directly with the CLOCK-BMAL1 at the tail end of the nascent transcript peak to recruit complexes containing the SIN3-HDAC that remodel chromatin to repress transcription. Second, brings H3K9 methyltransferases such as SUV39H1 and SUV39H2 to the E-box elements of the circadian target genes, like PER2 itself or PER1. The recruitment of each repressive modifier to the DNA seems to be very precisely temporally orchestrated by the large PER complex, the deacetylases acting before than the methyltransferases. Additionally, large PER complexes are also recruited to the target genes 3' termination site through interactions with RNA-binding proteins and helicases that may play a role in transcription termination to regulate transcription independently of CLOCK-BMAL1 interactions. This is Period circadian protein homolog 2 (PER2) from Gallus gallus (Chicken).